The chain runs to 89 residues: Small ribosomal subunit protein uS15 (89 aa).

This sequence belongs to the universal ribosomal protein uS15 family. Part of the 30S ribosomal subunit. Forms a bridge to the 50S subunit in the 70S ribosome, contacting the 23S rRNA.

Functionally, one of the primary rRNA binding proteins, it binds directly to 16S rRNA where it helps nucleate assembly of the platform of the 30S subunit by binding and bridging several RNA helices of the 16S rRNA. Its function is as follows. Forms an intersubunit bridge (bridge B4) with the 23S rRNA of the 50S subunit in the ribosome. The polypeptide is Small ribosomal subunit protein uS15 (Lactobacillus delbrueckii subsp. bulgaricus (strain ATCC 11842 / DSM 20081 / BCRC 10696 / JCM 1002 / NBRC 13953 / NCIMB 11778 / NCTC 12712 / WDCM 00102 / Lb 14)).